A 484-amino-acid chain; its full sequence is Transcription factor TGAL4 (484 aa).

Residues 1–11 show a composition bias toward polar residues; that stretch reads MGEASSSSGHP. Disordered stretches follow at residues 1 to 22, 84 to 137, and 155 to 181; these read MGEASSSSGHPRQNPHVLGYGF, ATAA…NASS, and QQEQHKKMATNSPTHSSKTGKALDPKT. Residues 123–137 are compositionally biased toward low complexity; that stretch reads SESSSKNNSNQNASS. Over residues 163 to 173 the composition is skewed to polar residues; sequence ATNSPTHSSKT. Residues 178–222 form the bZIP domain; it reads DPKTMRRLAQNREAARKSRLRKKAYIQQLESSKLKLAQMEQDIHR. Residues 180 to 200 form a basic motif region; the sequence is KTMRRLAQNREAARKSRLRKK. The interval 206–220 is leucine-zipper; sequence LESSKLKLAQMEQDI. A DOG1 domain is found at 241–455; it reads AAMFDVDYAR…RALSSLWASR (215 aa).

This sequence belongs to the bZIP family. Interacts with NPR1/NH1 and NPR3/NH3.

It localises to the nucleus. Its function is as follows. Transcriptional regulator involved in defense response. The sequence is that of Transcription factor TGAL4 from Oryza sativa subsp. japonica (Rice).